Here is a 979-residue protein sequence, read N- to C-terminus: UPF0182 protein BCG_0095 (979 aa).

7 helical membrane passes run 19–39 (LVTA…LVDI), 63–83 (LAIV…ALLL), 114–134 (LFGW…ASFD), 174–194 (WLFV…YLFG), 211–231 (VQLA…YWLD), 260–280 (KLVL…AIFL), and 288–308 (MAAA…PLLM). The disordered stretch occupies residues 898-948 (GTGRVATAPGGDAASAPPPGAGGPAPPQAVPPPRTTQPPAAPPRGPDVPPA). Residues 902 to 912 (VATAPGGDAAS) show a composition bias toward low complexity. The span at 913-946 (APPPGAGGPAPPQAVPPPRTTQPPAAPPRGPDVP) shows a compositional bias: pro residues.

Belongs to the UPF0182 family.

The protein resides in the cell membrane. This chain is UPF0182 protein BCG_0095, found in Mycobacterium bovis (strain BCG / Pasteur 1173P2).